Consider the following 320-residue polypeptide: Chitinase 3 (320 aa).

Positions 1–18 (MRALALAVVAMAVVAVRG) are cleaved as a signal peptide. The region spanning 19–59 (EQCGSQAGGALCPNCLCCSQYGWCGSTSDYCGAGCQSQCSG) is the Chitin-binding type-1 domain. 8 disulfides stabilise this stretch: C21-C36, C30-C42, C33-C61, C35-C49, C53-C57, C97-C159, C172-C180, and C279-C311. E141 acts as the Proton donor in catalysis.

Belongs to the glycosyl hydrolase 19 family. Chitinase class I subfamily. As to expression, expressed at low levels in roots, leaves, sheaths and meristems.

The enzyme catalyses Random endo-hydrolysis of N-acetyl-beta-D-glucosaminide (1-&gt;4)-beta-linkages in chitin and chitodextrins.. Hydrolyzes chitin and plays a role in defense against fungal pathogens containing chitin. Inhibits the growth of T.reesei fungus on plate assay. In Oryza sativa subsp. japonica (Rice), this protein is Chitinase 3 (Cht3).